We begin with the raw amino-acid sequence, 248 residues long: Probable transcriptional regulatory protein SO_2432 (248 aa).

The protein belongs to the TACO1 family.

The protein localises to the cytoplasm. The protein is Probable transcriptional regulatory protein SO_2432 of Shewanella oneidensis (strain ATCC 700550 / JCM 31522 / CIP 106686 / LMG 19005 / NCIMB 14063 / MR-1).